A 568-amino-acid chain; its full sequence is NADPH oxidase 3 (568 aa).

The Cytoplasmic portion of the chain corresponds to 1–13 (MMGCWILNEGLST). The chain crosses the membrane as a helical span at residues 14–34 (ILVLSWLGINFYLFIDTFYWY). Residues 35 to 51 (EEEESFHYTRVILGSTL) lie on the Extracellular side of the membrane. The helical transmembrane segment at 52–72 (AWARASALCLNFNCMLILIPV) threads the bilayer. Residues 55–284 (RASALCLNFN…VVLYACERII (230 aa)) enclose the Ferric oxidoreductase domain. Over 73-103 (SRNLISFIRGTSICCRGPWRRQLDKNLRFHK) the chain is Cytoplasmic. A helical membrane pass occupies residues 104–124 (LVAYGIAVNATIHIVAHFFNL). Residues 125 to 167 (ERYHWSQSEEAQGLLAALSKLGNTPNESYLNPVRTFPTNTTTE) lie on the Extracellular side of the membrane. Asn163 carries an N-linked (GlcNAc...) asparagine glycan. Residues 168–188 (LLRTIAGVTGLVISLALVLIM) traverse the membrane as a helical segment. At 189-201 (TSSTEFIRQASYE) the chain is on the cytoplasmic side. Residues 202–222 (LFWYTHHVFIVFFLSLAIHGT) form a helical membrane-spanning segment. The Extracellular segment spans residues 223-395 (GRIVRGQTQD…DGPFGTALTD (173 aa)). A glycan (N-linked (GlcNAc...) asparagine) is linked at Asn238. Residues 285 to 395 (RFWRFQQEVV…DGPFGTALTD (111 aa)) enclose the FAD-binding FR-type domain. The helical transmembrane segment at 396–416 (VFHYPVCVCVAAGIGVTPFAA) threads the bilayer. Residues 417-568 (LLKSIWYKCS…VHFYYNKESF (152 aa)) lie on the Cytoplasmic side of the membrane.

In terms of assembly, interacts with CYBA/p22phox. Heterodimerization with CYBA/p22phox is essential for its activity and cell membrane localization. It depends on heme as a cofactor. In terms of processing, N-glycosylated in a CYBA/p22phox-dependent manner.

Its subcellular location is the cell membrane. It catalyses the reaction NADPH + 2 O2 = 2 superoxide + NADP(+) + H(+). Activated by the ototoxic drug cisplatin. Activated by NOXO1. Cooperatively activated by NCF1 and NCF2 or NOXA1 in a phorbol 12-myristate 13-acetate (PMA)-dependent manner. Inhibited by diphenyleneiodonium chloride. In terms of biological role, NADPH oxidase that catalyzes the generation of superoxide from molecular oxygen utilizing NADPH as an electron donor, upon formation of a complex with CYBA/p22phox. Plays a role in the biogenesis of otoconia/otolith, which are crystalline structures of the inner ear involved in the perception of gravity. The polypeptide is NADPH oxidase 3 (NOX3) (Homo sapiens (Human)).